Consider the following 347-residue polypeptide: Transcription factor JunD (347 aa).

Positions 1-46 (METPFYGDEALSGLGGGGSSSGGGGSFASPGRLFPGAPPTAAPGSM) are disordered. The segment covering 13–26 (GLGGGGSSSGGGGS) has biased composition (gly residues). The short motif at 29–41 (SPGRLFPGAPPTA) is the Menin-binding motif (MBM) element. Positions 48 to 57 (KKDALTLSLS) match the MAP kinase docking motif; essential for its phosphorylation motif. A disordered region spans residues 63 to 91 (ALKPAAAPPPGPLRTDGAPGTAPPDGLLA). S92 is subject to Phosphoserine. A Phosphoserine; by MAPK8 modification is found at S102. Phosphothreonine is present on T119. Disordered regions lie at residues 164–183 (AAAGGPSGTAAGAAPPSELA) and 218–264 (EPVP…IDMD). Positions 220–231 (VPFPPPPPPGTL) are enriched in pro residues. 3 positions are modified to phosphoserine: S251, S255, and S259. The basic motif stretch occupies residues 268-295 (RIKAERKRLRNRIAASKCRKRKLERISR). Positions 268–331 (RIKAERKRLR…AQLKQKVLSH (64 aa)) constitute a bZIP domain. Residues 296–324 (LEEKVKTLKSQNTELASTASLLREQVAQL) are leucine-zipper.

It belongs to the bZIP family. Jun subfamily. In terms of assembly, heterodimer; binds DNA as a heterodimer. Component of an AP-1 transcription factor complex composed of JUN-FOS heterodimers. As part of the AP-1 transcription factor complex, forms heterodimers with FOS proteins, thereby binding to the AP-1 consensus sequence and stimulating transcription. Forms heterodimers with FOSB; thereby binding to the AP-1 consensus sequence. Interacts (via MBM motif) with MEN1; this interaction represses transcriptional activation. Interacts with MAPK10; this interaction is inhibited in the presence of MEN1. Phosphorylated by MAP kinases MAPK8 and MAPK10; phosphorylation is inhibited in the presence of MEN1.

Its subcellular location is the nucleus. In terms of biological role, transcription factor binding AP-1 sites. Heterodimerizes with proteins of the FOS family to form an AP-1 transcription factor complex, thereby enhancing their DNA binding activity to an AP-1 consensus sequence 3'-TGA[GC]TCA-5' and enhancing their transcriptional activity. The chain is Transcription factor JunD (JUND) from Bos taurus (Bovine).